The primary structure comprises 118 residues: Small ribosomal subunit protein bS6 (118 aa).

The protein belongs to the bacterial ribosomal protein bS6 family.

Binds together with bS18 to 16S ribosomal RNA. The sequence is that of Small ribosomal subunit protein bS6 from Orientia tsutsugamushi (strain Ikeda) (Rickettsia tsutsugamushi).